The following is a 133-amino-acid chain: ATP synthase epsilon chain (133 aa).

It belongs to the ATPase epsilon chain family. As to quaternary structure, F-type ATPases have 2 components, CF(1) - the catalytic core - and CF(0) - the membrane proton channel. CF(1) has five subunits: alpha(3), beta(3), gamma(1), delta(1), epsilon(1). CF(0) has three main subunits: a, b and c.

It localises to the cell membrane. Produces ATP from ADP in the presence of a proton gradient across the membrane. This is ATP synthase epsilon chain from Bacillus anthracis (strain A0248).